The sequence spans 177 residues: ATP synthase subunit delta (177 aa).

The protein belongs to the ATPase delta chain family. In terms of assembly, F-type ATPases have 2 components, F(1) - the catalytic core - and F(0) - the membrane proton channel. F(1) has five subunits: alpha(3), beta(3), gamma(1), delta(1), epsilon(1). F(0) has three main subunits: a(1), b(2) and c(10-14). The alpha and beta chains form an alternating ring which encloses part of the gamma chain. F(1) is attached to F(0) by a central stalk formed by the gamma and epsilon chains, while a peripheral stalk is formed by the delta and b chains.

It localises to the cell inner membrane. Functionally, f(1)F(0) ATP synthase produces ATP from ADP in the presence of a proton or sodium gradient. F-type ATPases consist of two structural domains, F(1) containing the extramembraneous catalytic core and F(0) containing the membrane proton channel, linked together by a central stalk and a peripheral stalk. During catalysis, ATP synthesis in the catalytic domain of F(1) is coupled via a rotary mechanism of the central stalk subunits to proton translocation. This protein is part of the stalk that links CF(0) to CF(1). It either transmits conformational changes from CF(0) to CF(1) or is implicated in proton conduction. This chain is ATP synthase subunit delta, found in Escherichia coli O81 (strain ED1a).